The sequence spans 378 residues: Anhydro-N-acetylmuramic acid kinase 2 (378 aa).

14 to 22 (GTVLDGNID) serves as a coordination point for ATP.

Belongs to the anhydro-N-acetylmuramic acid kinase family.

The enzyme catalyses 1,6-anhydro-N-acetyl-beta-muramate + ATP + H2O = N-acetyl-D-muramate 6-phosphate + ADP + H(+). It participates in amino-sugar metabolism; 1,6-anhydro-N-acetylmuramate degradation. Its pathway is cell wall biogenesis; peptidoglycan recycling. Its function is as follows. Catalyzes the specific phosphorylation of 1,6-anhydro-N-acetylmuramic acid (anhMurNAc) with the simultaneous cleavage of the 1,6-anhydro ring, generating MurNAc-6-P. Is required for the utilization of anhMurNAc either imported from the medium or derived from its own cell wall murein, and thus plays a role in cell wall recycling. In Jannaschia sp. (strain CCS1), this protein is Anhydro-N-acetylmuramic acid kinase 2.